The primary structure comprises 399 residues: Acetate kinase 2 (399 aa).

Asn10 contributes to the Mg(2+) binding site. An ATP-binding site is contributed by Lys17. Arg89 serves as a coordination point for substrate. The active-site Proton donor/acceptor is Asp146. Residues 206–210 (HLGNG), 281–283 (DCR), and 329–333 (GIGEN) contribute to the ATP site. Glu384 serves as a coordination point for Mg(2+).

It belongs to the acetokinase family. Homodimer. The cofactor is Mg(2+). Mn(2+) is required as a cofactor.

Its subcellular location is the cytoplasm. The catalysed reaction is acetate + ATP = acetyl phosphate + ADP. It functions in the pathway metabolic intermediate biosynthesis; acetyl-CoA biosynthesis; acetyl-CoA from acetate: step 1/2. Catalyzes the formation of acetyl phosphate from acetate and ATP. Can also catalyze the reverse reaction. This is Acetate kinase 2 from Neisseria meningitidis serogroup B (strain ATCC BAA-335 / MC58).